The primary structure comprises 549 residues: Maturase K (549 aa).

It belongs to the intron maturase 2 family. MatK subfamily.

The protein localises to the plastid. The protein resides in the chloroplast. Functionally, usually encoded in the trnK tRNA gene intron. Probably assists in splicing its own and other chloroplast group II introns. The polypeptide is Maturase K (Albidella oligococca (Caldesia oligococca)).